The sequence spans 476 residues: Bifunctional protein HldE (476 aa).

A ribokinase region spans residues 1-318 (MFQYSAEFKQ…ENAIHGRSNT (318 aa)). 195–198 (NMSE) serves as a coordination point for ATP. The active site involves aspartate 264. The interval 344 to 476 (MTNGCFDILH…VISKIQQLKD (133 aa)) is cytidylyltransferase.

The protein in the N-terminal section; belongs to the carbohydrate kinase PfkB family. It in the C-terminal section; belongs to the cytidylyltransferase family. As to quaternary structure, homodimer.

The enzyme catalyses D-glycero-beta-D-manno-heptose 7-phosphate + ATP = D-glycero-beta-D-manno-heptose 1,7-bisphosphate + ADP + H(+). It catalyses the reaction D-glycero-beta-D-manno-heptose 1-phosphate + ATP + H(+) = ADP-D-glycero-beta-D-manno-heptose + diphosphate. Its pathway is nucleotide-sugar biosynthesis; ADP-L-glycero-beta-D-manno-heptose biosynthesis; ADP-L-glycero-beta-D-manno-heptose from D-glycero-beta-D-manno-heptose 7-phosphate: step 1/4. It participates in nucleotide-sugar biosynthesis; ADP-L-glycero-beta-D-manno-heptose biosynthesis; ADP-L-glycero-beta-D-manno-heptose from D-glycero-beta-D-manno-heptose 7-phosphate: step 3/4. The protein operates within bacterial outer membrane biogenesis; LPS core biosynthesis. Its function is as follows. Catalyzes the phosphorylation of D-glycero-D-manno-heptose 7-phosphate at the C-1 position to selectively form D-glycero-beta-D-manno-heptose-1,7-bisphosphate. In terms of biological role, catalyzes the ADP transfer from ATP to D-glycero-beta-D-manno-heptose 1-phosphate, yielding ADP-D-glycero-beta-D-manno-heptose. In Pasteurella multocida (strain Pm70), this protein is Bifunctional protein HldE.